A 433-amino-acid chain; its full sequence is E3 ubiquitin-protein ligase RGLG5 (433 aa).

A disordered region spans residues 1 to 61; that stretch reads MGGSSSKESP…SYNSGRQTPK (61 aa). The N-myristoyl glycine moiety is linked to residue G2. The span at 22–39 shows a compositional bias: low complexity; the sequence is SVSGSSSYSSAWDQSSYY. The segment covering 40–61 has biased composition (polar residues); it reads QTPNHPSASPVSSYNSGRQTPK. In terms of domain architecture, VWFA spans 93-313; it reads NLIVGIDVTK…KEAEFALSAL (221 aa). Residues 340-383 form a disordered region; that stretch reads IALPPPTYATQSMRNSPRTSRSTSFQNKPYDNGVSSTPPSTTHN. Polar residues predominate over residues 347–383; the sequence is YATQSMRNSPRTSRSTSFQNKPYDNGVSSTPPSTTHN. The segment at 390 to 423 adopts an RING-type zinc-finger fold; sequence CPVCLVSAKNMAFNCGHQTCAGCGEDLHVCPICR.

As to quaternary structure, interacts with PP2CA. N-myristoylated.

It is found in the cell membrane. It carries out the reaction S-ubiquitinyl-[E2 ubiquitin-conjugating enzyme]-L-cysteine + [acceptor protein]-L-lysine = [E2 ubiquitin-conjugating enzyme]-L-cysteine + N(6)-ubiquitinyl-[acceptor protein]-L-lysine.. Together with RGLG1, mediates the ubiquitination and subsequent proteasomal degradation of the target protein PP2CA. Functions as a positive regulator of abscisic acid (ABA) signaling through ABA-dependent degradation of PP2CA, a major inhibitor of ABA signaling. This chain is E3 ubiquitin-protein ligase RGLG5, found in Arabidopsis thaliana (Mouse-ear cress).